A 247-amino-acid polypeptide reads, in one-letter code: Phosphoribosylaminoimidazole-succinocarboxamide synthase (247 aa).

It belongs to the SAICAR synthetase family.

The catalysed reaction is 5-amino-1-(5-phospho-D-ribosyl)imidazole-4-carboxylate + L-aspartate + ATP = (2S)-2-[5-amino-1-(5-phospho-beta-D-ribosyl)imidazole-4-carboxamido]succinate + ADP + phosphate + 2 H(+). The protein operates within purine metabolism; IMP biosynthesis via de novo pathway; 5-amino-1-(5-phospho-D-ribosyl)imidazole-4-carboxamide from 5-amino-1-(5-phospho-D-ribosyl)imidazole-4-carboxylate: step 1/2. The sequence is that of Phosphoribosylaminoimidazole-succinocarboxamide synthase from Gloeobacter violaceus (strain ATCC 29082 / PCC 7421).